A 252-amino-acid chain; its full sequence is Carbohydrate deacetylase (252 aa).

Residues histidine 59 and histidine 122 each contribute to the Mg(2+) site.

It belongs to the YdjC deacetylase family. Homodimer. Requires Mg(2+) as cofactor.

Functionally, probably catalyzes the deacetylation of acetylated carbohydrates an important step in the degradation of oligosaccharides. This is Carbohydrate deacetylase from Vibrio cholerae serotype O1 (strain ATCC 39541 / Classical Ogawa 395 / O395).